The sequence spans 328 residues: Ketol-acid reductoisomerase (NADP(+)) (328 aa).

One can recognise a KARI N-terminal Rossmann domain in the interval 1 to 179 (MRVLYERDGD…GGGAAGIIET (179 aa)). Residues 24–27 (YGSQ), R47, and S51 contribute to the NADP(+) site. H106 is a catalytic residue. An NADP(+)-binding site is contributed by G132. The 146-residue stretch at 180–325 (TFVDETETDL…ARLRSRMTCA (146 aa)) folds into the KARI C-terminal knotted domain. D188, E192, E224, and E228 together coordinate Mg(2+). S249 serves as a coordination point for substrate.

The protein belongs to the ketol-acid reductoisomerase family. Mg(2+) serves as cofactor.

The catalysed reaction is (2R)-2,3-dihydroxy-3-methylbutanoate + NADP(+) = (2S)-2-acetolactate + NADPH + H(+). It carries out the reaction (2R,3R)-2,3-dihydroxy-3-methylpentanoate + NADP(+) = (S)-2-ethyl-2-hydroxy-3-oxobutanoate + NADPH + H(+). It participates in amino-acid biosynthesis; L-isoleucine biosynthesis; L-isoleucine from 2-oxobutanoate: step 2/4. The protein operates within amino-acid biosynthesis; L-valine biosynthesis; L-valine from pyruvate: step 2/4. Functionally, involved in the biosynthesis of branched-chain amino acids (BCAA). Catalyzes an alkyl-migration followed by a ketol-acid reduction of (S)-2-acetolactate (S2AL) to yield (R)-2,3-dihydroxy-isovalerate. In the isomerase reaction, S2AL is rearranged via a Mg-dependent methyl migration to produce 3-hydroxy-3-methyl-2-ketobutyrate (HMKB). In the reductase reaction, this 2-ketoacid undergoes a metal-dependent reduction by NADPH to yield (R)-2,3-dihydroxy-isovalerate. This chain is Ketol-acid reductoisomerase (NADP(+)), found in Tremblaya princeps.